The chain runs to 191 residues: MVGKRLWVTGYRAYELNVFGSNDPKLKVLKTSLKNTLMQFLDEGLEWLITGGQLGVEQWAVEVALGLKPLYPDFKIAMMVPFTDFGKQWNEDNQGQLAALRGQVDFSDAVSQAPYQQPAQLQGYTRFMTIHTDAALLVYDPEFPGKAKWDYQAAEAMADRRDYPVQLITMDDLEETAQAMAEAENEHFQND.

Belongs to the UPF0398 family.

In Lacticaseibacillus casei (strain BL23) (Lactobacillus casei), this protein is UPF0398 protein LCABL_17010.